Reading from the N-terminus, the 290-residue chain is MSWFESFVLGLVQGLTEFLPISSSAHLRLTAAFAGWHDPGAAFTAISQIGTEAAVLIYFRKDIARILSAWFRSLTDRSMRGDHDAQMGWLVIVGSIPIGVLGITLKDQIEGPFRDLRLIATTLIVMGIVLGVADRLAARDETGGKHRVVKERKTLKDLGVKDGLIYGFCQAMALIPGVSRSGATISGGLLMGYTRESAARYSFLLAIPAVLASGAYELKDVGEGHVSWGPTIFATLVAFFVGYAVIAWFMKFITTKSFMPFVIYRILLGVVLFILIWAGVLSPHAGESAG.

6 consecutive transmembrane segments (helical) span residues 39–59, 85–105, 118–138, 202–222, 230–250, and 261–281; these read PGAA…LIYF, AQMG…GITL, LIAT…RLAA, SFLL…KDVG, PTIF…AWFM, and FVIY…AGVL.

The protein belongs to the UppP family.

It localises to the cell membrane. The catalysed reaction is di-trans,octa-cis-undecaprenyl diphosphate + H2O = di-trans,octa-cis-undecaprenyl phosphate + phosphate + H(+). Its function is as follows. Catalyzes the dephosphorylation of undecaprenyl diphosphate (UPP). Confers resistance to bacitracin. This chain is Undecaprenyl-diphosphatase, found in Streptomyces griseus subsp. griseus (strain JCM 4626 / CBS 651.72 / NBRC 13350 / KCC S-0626 / ISP 5235).